Here is a 243-residue protein sequence, read N- to C-terminus: 3-deoxy-manno-octulosonate cytidylyltransferase (243 aa).

It belongs to the KdsB family.

The protein localises to the cytoplasm. It catalyses the reaction 3-deoxy-alpha-D-manno-oct-2-ulosonate + CTP = CMP-3-deoxy-beta-D-manno-octulosonate + diphosphate. The protein operates within nucleotide-sugar biosynthesis; CMP-3-deoxy-D-manno-octulosonate biosynthesis; CMP-3-deoxy-D-manno-octulosonate from 3-deoxy-D-manno-octulosonate and CTP: step 1/1. It functions in the pathway bacterial outer membrane biogenesis; lipopolysaccharide biosynthesis. Activates KDO (a required 8-carbon sugar) for incorporation into bacterial lipopolysaccharide in Gram-negative bacteria. The chain is 3-deoxy-manno-octulosonate cytidylyltransferase from Helicobacter pylori (strain ATCC 700392 / 26695) (Campylobacter pylori).